Reading from the N-terminus, the 615-residue chain is Zinc metalloproteinase R519 (615 aa).

The region spanning 1–611 (MTYRSCIPQN…LDPQLRSRIL (611 aa)) is the Peptidase M13 domain. H454 contacts Zn(2+). The active site involves E455. Residues H458 and E513 each contribute to the Zn(2+) site. D517 serves as the catalytic Proton donor.

This sequence belongs to the peptidase M13 family. Zn(2+) is required as a cofactor.

Functionally, zinc metalloprotease. This chain is Zinc metalloproteinase R519, found in Acanthamoeba polyphaga (Amoeba).